Reading from the N-terminus, the 320-residue chain is MKILLANPRGFCAGVSRAVETVEKVLEVEKSPVYVRHEVVHNKVVVDSLKKKGVVFVKEVDEVPDDAVCIFSAHGVSLKVEEAAAKKNLVLYDATCPLVTKVHRGVRLASNNDAECILIGHKGHPEVQGTMGQYRSKKGAIYLIESEEDLNKLTIKDPDNLYYATQTTLSVDETQGIIQALKDKYPNIKGPKKEDICYATQNRQTAIKAMLKHIDVLVVVGSQNSSNSNRLKELATLAGIDAYLVDNPKDVDKLWFDNKKVCGVSAGASAPEYLVQQIISQISKVCSTEVEVEEFEGIKEEVYFPLPRLLKQKIGTGKVE.

Cys-12 is a binding site for [4Fe-4S] cluster. Residues His-41 and His-74 each contribute to the (2E)-4-hydroxy-3-methylbut-2-enyl diphosphate site. 2 residues coordinate dimethylallyl diphosphate: His-41 and His-74. His-41 and His-74 together coordinate isopentenyl diphosphate. [4Fe-4S] cluster is bound at residue Cys-96. Residue His-124 participates in (2E)-4-hydroxy-3-methylbut-2-enyl diphosphate binding. His-124 provides a ligand contact to dimethylallyl diphosphate. His-124 is a binding site for isopentenyl diphosphate. Glu-126 (proton donor) is an active-site residue. Thr-167 provides a ligand contact to (2E)-4-hydroxy-3-methylbut-2-enyl diphosphate. Residue Cys-197 participates in [4Fe-4S] cluster binding. (2E)-4-hydroxy-3-methylbut-2-enyl diphosphate contacts are provided by Ser-225, Ser-226, Asn-227, and Ser-269. The dimethylallyl diphosphate site is built by Ser-225, Ser-226, Asn-227, and Ser-269. 4 residues coordinate isopentenyl diphosphate: Ser-225, Ser-226, Asn-227, and Ser-269.

Belongs to the IspH family. The cofactor is [4Fe-4S] cluster.

It carries out the reaction isopentenyl diphosphate + 2 oxidized [2Fe-2S]-[ferredoxin] + H2O = (2E)-4-hydroxy-3-methylbut-2-enyl diphosphate + 2 reduced [2Fe-2S]-[ferredoxin] + 2 H(+). The enzyme catalyses dimethylallyl diphosphate + 2 oxidized [2Fe-2S]-[ferredoxin] + H2O = (2E)-4-hydroxy-3-methylbut-2-enyl diphosphate + 2 reduced [2Fe-2S]-[ferredoxin] + 2 H(+). Its pathway is isoprenoid biosynthesis; dimethylallyl diphosphate biosynthesis; dimethylallyl diphosphate from (2E)-4-hydroxy-3-methylbutenyl diphosphate: step 1/1. It participates in isoprenoid biosynthesis; isopentenyl diphosphate biosynthesis via DXP pathway; isopentenyl diphosphate from 1-deoxy-D-xylulose 5-phosphate: step 6/6. Its function is as follows. Catalyzes the conversion of 1-hydroxy-2-methyl-2-(E)-butenyl 4-diphosphate (HMBPP) into a mixture of isopentenyl diphosphate (IPP) and dimethylallyl diphosphate (DMAPP). Acts in the terminal step of the DOXP/MEP pathway for isoprenoid precursor biosynthesis. The polypeptide is 4-hydroxy-3-methylbut-2-enyl diphosphate reductase (Francisella tularensis subsp. novicida (strain U112)).